The following is a 368-amino-acid chain: Ferrochelatase (368 aa).

2 residues coordinate Fe cation: H209 and E290.

The protein belongs to the ferrochelatase family.

It is found in the cytoplasm. It carries out the reaction heme b + 2 H(+) = protoporphyrin IX + Fe(2+). It participates in porphyrin-containing compound metabolism; protoheme biosynthesis; protoheme from protoporphyrin-IX: step 1/1. Functionally, catalyzes the ferrous insertion into protoporphyrin IX. This Herminiimonas arsenicoxydans protein is Ferrochelatase.